The primary structure comprises 108 residues: uncharacterized protein (108 aa).

Residues 20–74 (VRQRRTALILDQETLARRIGVSFQQIQKYERGRNRISASRLYDIAKALAVPIDYF) form the HTH cro/C1-type domain. Positions 31–50 (QETLARRIGVSFQQIQKYER) form a DNA-binding region, H-T-H motif.

This is an uncharacterized protein from Rhodospirillum rubrum.